The chain runs to 176 residues: Glyoxalase domain-containing protein RDO1 (176 aa).

The VOC domain maps to Ser-53–Tyr-172. The Proton donor/acceptor role is filled by Glu-168.

This sequence belongs to the glyoxalase I family.

It functions in the pathway secondary metabolite biosynthesis. Its function is as follows. Glyoxalase domain-containing protein; part of the gene cluster that mediates the biosynthesis of itaconic acid and 2-hydroxyparaconate. Cis-aconitate is secreted by the mitochondrial tricarboxylate transporter MTT1. In the cytosol cis-aconitate is converted into trans-aconitate via isomerization by the aconitate-delta-isomerase ADI1. Decarboxylation of trans-aconitate by the trans-aconitate decarboxylase TAD1 then leads then to the production of itaconic acid. The cytochrome P450 monooxygenase CYP3 further converts itaconate to 2-hydroxyparaconate via oxidation of the double bond, leading to a transient epoxide, which can subsequently be lactonized to produce 2-hydroxyparaconate. Secretion of itaconate and possibly 2-hydroxyparaconate into the medium is mediated by the major facilitator ITP1. The glyoxalase domain-containing protein RDO1 is not involved in the biosynthesis of itaconate and 2-hydroxyparaconate, however, it might play a role in the further conversion of 2-hydroxyparaconate to itatartarate. In Mycosarcoma maydis (Corn smut fungus), this protein is Glyoxalase domain-containing protein RDO1.